The following is a 63-amino-acid chain: Translational regulator CsrA (63 aa).

Belongs to the CsrA/RsmA family. As to quaternary structure, homodimer; the beta-strands of each monomer intercalate to form a hydrophobic core, while the alpha-helices form wings that extend away from the core.

The protein localises to the cytoplasm. In terms of biological role, a key translational regulator that binds mRNA to regulate translation initiation and/or mRNA stability. Mediates global changes in gene expression, shifting from rapid growth to stress survival by linking envelope stress, the stringent response and the catabolite repression systems. Usually binds in the 5'-UTR; binding at or near the Shine-Dalgarno sequence prevents ribosome-binding, repressing translation, binding elsewhere in the 5'-UTR can activate translation and/or stabilize the mRNA. Its function is antagonized by small RNA(s). The chain is Translational regulator CsrA from Haemophilus influenzae (strain PittEE).